The sequence spans 122 residues: Large ribosomal subunit protein uL14 (122 aa).

This sequence belongs to the universal ribosomal protein uL14 family. Part of the 50S ribosomal subunit. Forms a cluster with proteins L3 and L19. In the 70S ribosome, L14 and L19 interact and together make contacts with the 16S rRNA in bridges B5 and B8.

Binds to 23S rRNA. Forms part of two intersubunit bridges in the 70S ribosome. The protein is Large ribosomal subunit protein uL14 of Mycobacterium tuberculosis (strain ATCC 25177 / H37Ra).